Consider the following 480-residue polypeptide: Aspartyl/glutamyl-tRNA(Asn/Gln) amidotransferase subunit B (480 aa).

It belongs to the GatB/GatE family. GatB subfamily. As to quaternary structure, heterotrimer of A, B and C subunits.

It catalyses the reaction L-glutamyl-tRNA(Gln) + L-glutamine + ATP + H2O = L-glutaminyl-tRNA(Gln) + L-glutamate + ADP + phosphate + H(+). The catalysed reaction is L-aspartyl-tRNA(Asn) + L-glutamine + ATP + H2O = L-asparaginyl-tRNA(Asn) + L-glutamate + ADP + phosphate + 2 H(+). Allows the formation of correctly charged Asn-tRNA(Asn) or Gln-tRNA(Gln) through the transamidation of misacylated Asp-tRNA(Asn) or Glu-tRNA(Gln) in organisms which lack either or both of asparaginyl-tRNA or glutaminyl-tRNA synthetases. The reaction takes place in the presence of glutamine and ATP through an activated phospho-Asp-tRNA(Asn) or phospho-Glu-tRNA(Gln). The polypeptide is Aspartyl/glutamyl-tRNA(Asn/Gln) amidotransferase subunit B (Streptococcus thermophilus (strain ATCC BAA-491 / LMD-9)).